A 328-amino-acid chain; its full sequence is 2-oxoglutarate-dependent dioxygenase gloF (328 aa).

The Fe2OG dioxygenase domain occupies 175-289 (DTSELRMNHY…RYSVAYFGKP (115 aa)). Residues histidine 201, aspartate 203, and histidine 261 each contribute to the Fe cation site. Residue arginine 280 participates in 2-oxoglutarate binding.

This sequence belongs to the iron/ascorbate-dependent oxidoreductase family. Fe(2+) serves as cofactor.

Its pathway is mycotoxin biosynthesis. 2-oxoglutarate-dependent dioxygenase; part of the gene cluster that mediates the biosynthesis of pneumocandins, lipohexapeptides of the echinocandin family that prevent fungal cell wall formation by non-competitive inhibition of beta-1,3-glucan synthase. The 10,12-dimethylmyristoyl side chain is synthesized by the reducing polyketide synthase gloL/GLPKS4. The thioesterase gloN/GLHYD exclusively interacts with gloL/GLPKS4 to maintain turnover of the polyketide side chain. The 10R,12S-dimethylmyristic acid is then transferred to the first thiolation domain of the nonribosomal peptide synthetase gloA/GLNRPS4 by the acyl-AMP ligase gloD/GLligase, followed by its acylation to L-ornithine to trigger elongation of the cyclic hexapeptide. L-ornithine, 4R-hydroxyl-L-proline (generated from L-proline by the dioxygenase gloF/GLOXY2), 3S-hydroxyl-L-homotyrosine (generated by gloG/GLHtyB, gloH/GLHtyA, gloI/GLHtyC, gloJ/GLHtyD and hydroxylated at C-3 by the dioxygenase gloM/GLOXY1), 3R-hydroxyl-L-glutamine (generated from L-glutamine probably by the dioxygenase gloE/GLOXY3) and 3S-hydroxyl-L-proline (generated from L-proline by the dioxygenase gloF/GLOXY2 to yield pneumocandin B0), or 3S-hydroxyl-4S-methyl-L-proline (generated from L-leucine by the dioxygenase gloC/GLOXY4 to yield pneumocandin A0) are sequentially added to the growing chain. The last C domain of gloA/GLNRPS4 is proposed to be responsible for cyclization by condensation to form the peptide bond between L-ornithine and 3S-hydroxyl-4S-methyl-L-proline (for pneumocandin A0) or 3S-hydroxyl-L-proline (for pneumocandin B0). Finally, the subsequent C-4 hydroxylation of 3S-hydroxyl-L-homotyrosine and L-ornithine dihydroxylation at C-4 and C-5 are performed by the cytochrome P450 monooxygenases gloP/GLP450-1 and gloO/GLP450-2, respectively. The protein is 2-oxoglutarate-dependent dioxygenase gloF of Glarea lozoyensis (strain ATCC 20868 / MF5171).